Consider the following 72-residue polypeptide: Translation initiation factor IF-1 (72 aa).

The S1-like domain occupies 1 to 72 (MSKEEVLEFS…TKGRITYRYK (72 aa)).

It belongs to the IF-1 family. As to quaternary structure, component of the 30S ribosomal translation pre-initiation complex which assembles on the 30S ribosome in the order IF-2 and IF-3, IF-1 and N-formylmethionyl-tRNA(fMet); mRNA recruitment can occur at any time during PIC assembly.

Its subcellular location is the cytoplasm. Its function is as follows. One of the essential components for the initiation of protein synthesis. Stabilizes the binding of IF-2 and IF-3 on the 30S subunit to which N-formylmethionyl-tRNA(fMet) subsequently binds. Helps modulate mRNA selection, yielding the 30S pre-initiation complex (PIC). Upon addition of the 50S ribosomal subunit IF-1, IF-2 and IF-3 are released leaving the mature 70S translation initiation complex. The protein is Translation initiation factor IF-1 of Bartonella bacilliformis (strain ATCC 35685 / KC583 / Herrer 020/F12,63).